The chain runs to 204 residues: uncharacterized protein (204 aa).

The interval 77–111 (APHGSRIPGRCRRSPRCSRRPGGSRLRGGTWTPRL) is disordered. A compositionally biased stretch (basic residues) spans 85–95 (GRCRRSPRCSR). A compositionally biased stretch (low complexity) spans 96 to 105 (RPGGSRLRGG).

This is an uncharacterized protein from Homo sapiens (Human).